The primary structure comprises 110 residues: ATP-dependent Clp protease adapter protein ClpS 2 (110 aa).

The disordered stretch occupies residues 1-24; the sequence is MSNDENRSGSPTGPNTSVITKVKP. Over residues 8 to 19 the composition is skewed to polar residues; it reads SGSPTGPNTSVI.

This sequence belongs to the ClpS family. In terms of assembly, binds to the N-terminal domain of the chaperone ClpA.

Involved in the modulation of the specificity of the ClpAP-mediated ATP-dependent protein degradation. The sequence is that of ATP-dependent Clp protease adapter protein ClpS 2 from Bradyrhizobium diazoefficiens (strain JCM 10833 / BCRC 13528 / IAM 13628 / NBRC 14792 / USDA 110).